The chain runs to 372 residues: NAD(P)H-quinone oxidoreductase subunit 1 (372 aa).

9 consecutive transmembrane segments (helical) span residues 27–47 (AIWMPLPMILMLIGATVGVLV), 65–85 (PEYIGPLGLLAPVADGLKLVF), 97–117 (WLFTLGPILVVLPVFLSYLIV), 128–148 (IGTGIFLWIALSSIQPIGLLM), 166–186 (AAQSISYEIPLALSVLAIVMM), 204–224 (ILGWNIWRQPLGFLIFWIAAL), 266–286 (VLSALLVAVLYLGGWDFPIPI), 308–328 (ALGITMTLVKAYFLVFIAILL), and 347–367 (FLLPVGLVNLLLTAALKLAFP).

It belongs to the complex I subunit 1 family. In terms of assembly, NDH-1 is composed of at least 11 different subunits.

It localises to the cellular thylakoid membrane. It catalyses the reaction a plastoquinone + NADH + (n+1) H(+)(in) = a plastoquinol + NAD(+) + n H(+)(out). The enzyme catalyses a plastoquinone + NADPH + (n+1) H(+)(in) = a plastoquinol + NADP(+) + n H(+)(out). Its function is as follows. NDH-1 shuttles electrons from an unknown electron donor, via FMN and iron-sulfur (Fe-S) centers, to quinones in the respiratory and/or the photosynthetic chain. The immediate electron acceptor for the enzyme in this species is believed to be plastoquinone. Couples the redox reaction to proton translocation, and thus conserves the redox energy in a proton gradient. This chain is NAD(P)H-quinone oxidoreductase subunit 1, found in Trichormus variabilis (strain ATCC 29413 / PCC 7937) (Anabaena variabilis).